The primary structure comprises 427 residues: Trigger factor (427 aa).

The region spanning 160–240 (TDTVIGDVVK…VKEVKRLELP (81 aa)) is the PPIase FKBP-type domain.

This sequence belongs to the FKBP-type PPIase family. Tig subfamily.

The protein localises to the cytoplasm. The enzyme catalyses [protein]-peptidylproline (omega=180) = [protein]-peptidylproline (omega=0). Its function is as follows. Involved in protein export. Acts as a chaperone by maintaining the newly synthesized protein in an open conformation. Functions as a peptidyl-prolyl cis-trans isomerase. The sequence is that of Trigger factor from Chlorobium limicola (strain DSM 245 / NBRC 103803 / 6330).